Here is a 119-residue protein sequence, read N- to C-terminus: Large ribosomal subunit protein uL18 (119 aa).

It belongs to the universal ribosomal protein uL18 family. In terms of assembly, part of the 50S ribosomal subunit; part of the 5S rRNA/L5/L18/L25 subcomplex. Contacts the 5S and 23S rRNAs.

Functionally, this is one of the proteins that bind and probably mediate the attachment of the 5S RNA into the large ribosomal subunit, where it forms part of the central protuberance. The polypeptide is Large ribosomal subunit protein uL18 (Clostridium perfringens (strain 13 / Type A)).